Consider the following 206-residue polypeptide: Dephospho-CoA kinase (206 aa).

The region spanning 4–200 (TVALTGGIGS…ASYLKLASQF (197 aa)) is the DPCK domain. Position 12–17 (12–17 (GSGKST)) interacts with ATP.

This sequence belongs to the CoaE family.

The protein localises to the cytoplasm. It catalyses the reaction 3'-dephospho-CoA + ATP = ADP + CoA + H(+). Its pathway is cofactor biosynthesis; coenzyme A biosynthesis; CoA from (R)-pantothenate: step 5/5. In terms of biological role, catalyzes the phosphorylation of the 3'-hydroxyl group of dephosphocoenzyme A to form coenzyme A. The protein is Dephospho-CoA kinase of Salmonella choleraesuis (strain SC-B67).